The sequence spans 241 residues: 3-oxoacyl-[acyl-carrier-protein] reductase FabG (241 aa).

NADP(+) is bound by residues 13 to 16 (GASS), Ser38, 57 to 58 (EV), and Asn83. A substrate-binding site is contributed by Ser135. The Proton acceptor role is filled by Tyr148. Residues 148–152 (YCASK) and Ile181 each bind NADP(+).

This sequence belongs to the short-chain dehydrogenases/reductases (SDR) family. As to quaternary structure, homotetramer.

It catalyses the reaction a (3R)-hydroxyacyl-[ACP] + NADP(+) = a 3-oxoacyl-[ACP] + NADPH + H(+). Its pathway is lipid metabolism; fatty acid biosynthesis. In terms of biological role, catalyzes the NADPH-dependent reduction of beta-ketoacyl-ACP substrates to beta-hydroxyacyl-ACP products, the first reductive step in the elongation cycle of fatty acid biosynthesis. In Rickettsia prowazekii (strain Madrid E), this protein is 3-oxoacyl-[acyl-carrier-protein] reductase FabG (fabG).